The primary structure comprises 170 residues: Probable inactive uracil-DNA glycosylase, mitochondrial (170 aa).

Residues 1 to 53 (MALSTPKTLMDFFQPAKRLKASPSSSSSFPAVSVAGRSRDLGSVANSPPRVTV) constitute a mitochondrion transit peptide.

This sequence belongs to the uracil-DNA glycosylase (UDG) superfamily. UNG family.

Its subcellular location is the mitochondrion. Its function is as follows. Probable inactive paralog of AtUNG (AC Q9LIH6) generated by a gene duplication event and subsequently disrupted by at least two transposon insertions. This chain is Probable inactive uracil-DNA glycosylase, mitochondrial, found in Arabidopsis thaliana (Mouse-ear cress).